Consider the following 211-residue polypeptide: Protoglabretal synthase MOI1 (211 aa).

The next 5 membrane-spanning stretches (helical) occupy residues 16 to 36 (ASLHAWNGVSLLLIIFVTWII), 50 to 70 (LICWWALTGLIHVFQEGYYVF), 104 to 124 (VLGIESVASIVLGPLSLLAAY), 135 to 155 (IFQFAISIAQLYGTIQYFLTA), and 179 to 199 (IWVIVPMLIATRYWIKIHAIC). In terms of domain architecture, EXPERA spans 46-188 (IERLLICWWA…IWVIVPMLIA (143 aa)).

It belongs to the EBP family. Expressed in maturing fruits and in juice vesicles.

It is found in the membrane. It carries out the reaction 7,8-epoxymelianol = protoglabretal. Its pathway is secondary metabolite biosynthesis; terpenoid biosynthesis. In terms of biological role, isomerase involved in the biosynthesis of glabretanes triterpene natural products such as glabretal, a component with in vitro antiproliferative properties on lymphocytes. Catalyzes the conversion of 7,8-epoxymelianol to protoglabretal via skeletal rearrangements. This is Protoglabretal synthase MOI1 from Citrus sinensis (Sweet orange).